A 1513-amino-acid chain; its full sequence is Exo-beta-1,6-galactobiohydrolase (1513 aa).

The N-terminal stretch at 1–31 (MRVLSKSLAAMVAAATLVGGGAFAVAGTAYA) is a signal peptide. Positions 666–801 (VADTTSGDSA…PSANQTWTLR (136 aa)) constitute a Ricin B-type lectin domain. F5/8 type C domains are found at residues 965 to 1112 (AIYV…AFVT) and 1116 to 1273 (GAAK…VFAQ). The tract at residues 1456-1480 (VAPGPEEQKPGNTNKPGATGNGNKN) is disordered. Residues 1465–1480 (PGNTNKPGATGNGNKN) are compositionally biased toward polar residues. Residues 1489 to 1509 (VAAIAGAVALLAAAAGALFML) traverse the membrane as a helical segment.

This sequence belongs to the glycosyl hydrolase 30 family.

The protein resides in the cell membrane. It carries out the reaction Hydrolysis of (1-&gt;6)-beta-D-galactosidic linkages in arabinogalactan proteins and (1-&gt;3):(1-&gt;6)-beta-galactans to yield (1-&gt;6)-beta-galactobiose as the final product.. Functionally, involved in the type II arabinogalactan (AG) side chains degradation. Specifically releases the non-reducing terminal beta-1,6-galactobiose (beta-1,6-Gal2) from both dearabinosylated larch AG and polymeric beta-1,6-galactan chains by an exo-mode of action. Shows lower activity with larch AG, and very weak activity with dearabinosylated gum arabic, gum arabic and potato galactan. Can probably release beta-1,6-Gal2 from the internal side chains of type II AG. The polypeptide is Exo-beta-1,6-galactobiohydrolase (Bifidobacterium longum subsp. longum (strain ATCC 15707 / DSM 20219 / JCM 1217 / NCTC 11818 / E194b)).